The chain runs to 454 residues: ESX-1 secretion-associated protein EspB (454 aa).

Disordered stretches follow at residues 17-40, 82-128, and 391-454; these read RADE…SGLT, GEVE…AGES, and AGQG…QDNK. Positions 391 to 422 are enriched in gly residues; that stretch reads AGQGGGAAGRGMAGGGMGMPMGGAGQGQGGAK.

Belongs to the EspB family. In terms of processing, cleaved at close to the C-terminus during secretion.

The protein localises to the secreted. The chain is ESX-1 secretion-associated protein EspB from Mycobacterium marinum (strain ATCC BAA-535 / M).